The chain runs to 95 residues: HssA/B-like protein 45 (95 aa).

The tract at residues 1–31 is disordered; sequence MTLFSSISSISNPMTSSKSSIASFGSGTSMS.

This sequence belongs to the hssA/B family.

This is HssA/B-like protein 45 (hssl45) from Dictyostelium discoideum (Social amoeba).